The primary structure comprises 118 residues: MKNKYIEQFEAKQIEGKNVPDFRAGDTLKLAIRIKEGDKTRIQNFEGICIARRGNGVSETFIVRKMGANNVGVERIFPIYSESLESITVLRRGRVRRARLFYLRDRRGKAARIKELKK.

This sequence belongs to the bacterial ribosomal protein bL19 family.

Functionally, this protein is located at the 30S-50S ribosomal subunit interface and may play a role in the structure and function of the aminoacyl-tRNA binding site. This is Large ribosomal subunit protein bL19 from Campylobacter jejuni subsp. jejuni serotype O:6 (strain 81116 / NCTC 11828).